We begin with the raw amino-acid sequence, 114 residues long: Fluoride-specific ion channel FluC 1 (114 aa).

The next 4 helical transmembrane spans lie at 3-23 (IDIKNNTFFLISLGAFLGALF), 30-50 (IFIVNLIGCFLLGFFNSLNIL), 55-75 (LTLCVGLCGSMTTFSSWMSHL), and 87-107 (FLLNSLSIVLMGVLSIALGHI). Na(+) is bound by residues Gly63 and Thr66.

It belongs to the fluoride channel Fluc/FEX (TC 1.A.43) family.

It is found in the cell inner membrane. The catalysed reaction is fluoride(in) = fluoride(out). With respect to regulation, na(+) is not transported, but it plays an essential structural role and its presence is essential for fluoride channel function. Functionally, fluoride-specific ion channel. Important for reducing fluoride concentration in the cell, thus reducing its toxicity. This is Fluoride-specific ion channel FluC 1 from Prochlorococcus marinus (strain NATL2A).